A 749-amino-acid polypeptide reads, in one-letter code: Small G protein signaling modulator 3 (749 aa).

Positions 113–304 constitute a Rab-GAP TBC domain; the sequence is GIPHGMRPQL…RIWDLFFYEG (192 aa). Ser-405 bears the Phosphoserine mark. A coiled-coil region spans residues 414–438; sequence EDDLEALKAKNIKQTELVADLREAI. The SH3 domain maps to 479–538; that stretch reads SHRRRAKALLDFERHDDDELGFRKNDIITIISQKDEHCWVGELNGLRGWFPAKFVEVLDE. Residues 554–717 form the RUN domain; the sequence is GVTDLVRGTL…FAFSLSQDWE (164 aa).

This sequence belongs to the small G protein signaling modulator family. As to quaternary structure, interacts with GJA1. Interaction with GJA1 induces its degradation. Interacts (via RUN domain) with NF2 (via C-terminus). Interacts with RAB3A, RAB4A, RAB5A, RAB8A, RAB11A, RAP1A, RAP1B, RAP2A, RAP2B and PDCD6I. No interaction with RAB27A. No interaction with GJB1 or GJD2. Expressed in brain, liver, kidney and testis. Moderately expressed in heart, very weakly in lung and muscle. Not expressed in spleen.

It is found in the cytoplasm. In terms of biological role, may play a cooperative role in NF2-mediated growth suppression of cells. May act as a modulator of small G protein RAB- and RAP-mediated neuronal signal transduction and vesicular transportation pathways. The protein is Small G protein signaling modulator 3 of Rattus norvegicus (Rat).